The primary structure comprises 89 residues: Small ribosomal subunit protein bS20 (89 aa).

The segment covering 1-12 (MANIKSAKKRAK) has biased composition (basic residues). Residues 1 to 22 (MANIKSAKKRAKQTIVRNERNT) are disordered.

This sequence belongs to the bacterial ribosomal protein bS20 family.

Binds directly to 16S ribosomal RNA. The polypeptide is Small ribosomal subunit protein bS20 (Xanthomonas oryzae pv. oryzae (strain KACC10331 / KXO85)).